The following is a 288-amino-acid chain: 4-diphosphocytidyl-2-C-methyl-D-erythritol kinase (288 aa).

K12 is a catalytic residue. Residue 95 to 105 (PAGGGVGGGSS) coordinates ATP. D137 is a catalytic residue.

The protein belongs to the GHMP kinase family. IspE subfamily.

The catalysed reaction is 4-CDP-2-C-methyl-D-erythritol + ATP = 4-CDP-2-C-methyl-D-erythritol 2-phosphate + ADP + H(+). The protein operates within isoprenoid biosynthesis; isopentenyl diphosphate biosynthesis via DXP pathway; isopentenyl diphosphate from 1-deoxy-D-xylulose 5-phosphate: step 3/6. Catalyzes the phosphorylation of the position 2 hydroxy group of 4-diphosphocytidyl-2C-methyl-D-erythritol. This Halorhodospira halophila (strain DSM 244 / SL1) (Ectothiorhodospira halophila (strain DSM 244 / SL1)) protein is 4-diphosphocytidyl-2-C-methyl-D-erythritol kinase.